Here is a 317-residue protein sequence, read N- to C-terminus: Protoheme IX farnesyltransferase (317 aa).

9 helical membrane passes run 43-63 (PISV…AGAT), 65-85 (PVSG…CAGA), 119-139 (ALYW…NLNP), 140-160 (IAWI…SLWL), 168-188 (IVIG…AVTG), 195-215 (VLIA…LAIF), 238-258 (LNWL…IYFV), 261-281 (WGLV…ALSV), and 292-312 (AWVL…SMMV).

It belongs to the UbiA prenyltransferase family. Protoheme IX farnesyltransferase subfamily. As to quaternary structure, interacts with CtaA.

The protein localises to the cell membrane. It carries out the reaction heme b + (2E,6E)-farnesyl diphosphate + H2O = Fe(II)-heme o + diphosphate. The protein operates within porphyrin-containing compound metabolism; heme O biosynthesis; heme O from protoheme: step 1/1. Converts heme B (protoheme IX) to heme O by substitution of the vinyl group on carbon 2 of heme B porphyrin ring with a hydroxyethyl farnesyl side group. The chain is Protoheme IX farnesyltransferase from Desulforudis audaxviator (strain MP104C).